Reading from the N-terminus, the 591-residue chain is V-type ATP synthase alpha chain (591 aa).

Residue 232–239 (GPFGAGKT) participates in ATP binding.

The protein belongs to the ATPase alpha/beta chains family.

It catalyses the reaction ATP + H2O + 4 H(+)(in) = ADP + phosphate + 5 H(+)(out). In terms of biological role, produces ATP from ADP in the presence of a proton gradient across the membrane. The V-type alpha chain is a catalytic subunit. The protein is V-type ATP synthase alpha chain of Clostridium perfringens (strain SM101 / Type A).